An 89-amino-acid chain; its full sequence is Acyl carrier protein MbtL (89 aa).

Residues 7–82 form the Carrier domain; sequence ESVSAALTEI…DLEAAIQAKV (76 aa). Ser-42 bears the O-(pantetheine 4'-phosphoryl)serine mark.

In terms of processing, 4'-phosphopantetheine is transferred from CoA to a specific serine of apo-ACP, leading to the activated holo-ACP form.

It is found in the cytoplasm. It functions in the pathway siderophore biosynthesis; mycobactin biosynthesis. Acyl carrier protein involved in the formation of acyl-S-ACP intermediates within the mycobactin biosynthesis process. The sequence is that of Acyl carrier protein MbtL (mbtL) from Mycobacterium sp. (strain MCS).